Consider the following 402-residue polypeptide: Thyroid hormone receptor alpha (402 aa).

The tract at residues 1 to 22 (MEQKPSTLDPLSEPEDTRWLDG) is disordered. Residues 1–50 (MEQKPSTLDPLSEPEDTRWLDGKRKRKSSQCLVKSSMSGYIPSYLDKDEQ) are modulating. At Ser-12 the chain carries Phosphoserine; by CK2. A Phosphoserine modification is found at Ser-28. Zn(2+) contacts are provided by Cys-51, Cys-54, Cys-68, Cys-71, Cys-89, Cys-95, Cys-105, and Cys-108. 2 consecutive NR C4-type zinc fingers follow at residues 51–71 (CVVC…CEGC) and 89–113 (CKYD…FKKC). The segment at residues 51-125 (CVVCGDKATG…VGMAMDLVLD (75 aa)) is a DNA-binding region (nuclear receptor). The region spanning 161–402 (EEWELIHVVT…ELFPPLFLEV (242 aa)) is the NR LBD domain. The 3,3',5-triiodo-L-thyronine site is built by Arg-226 and Ser-275.

The protein belongs to the nuclear hormone receptor family. NR1 subfamily. In terms of assembly, probably interacts with SFPQ.

The protein localises to the nucleus. In terms of biological role, nuclear hormone receptor that can act as a repressor or activator of transcription. High affinity receptor for thyroid hormones, including triiodothyronine and thyroxine. The polypeptide is Thyroid hormone receptor alpha (THRA) (Aptenodytes patagonicus (King penguin)).